Consider the following 247-residue polypeptide: Triosephosphate isomerase (247 aa).

Residues Asn10 and Lys12 each contribute to the substrate site. The active-site Electrophile is His94. Glu164 serves as the catalytic Proton acceptor.

It belongs to the triosephosphate isomerase family. In terms of assembly, homodimer.

The enzyme catalyses D-glyceraldehyde 3-phosphate = dihydroxyacetone phosphate. It functions in the pathway carbohydrate biosynthesis; gluconeogenesis. It participates in carbohydrate degradation; glycolysis; D-glyceraldehyde 3-phosphate from glycerone phosphate: step 1/1. This is Triosephosphate isomerase (Tpi) from Culex tarsalis (Encephalitis mosquito).